Consider the following 432-residue polypeptide: Phytase AppA (432 aa).

The first 22 residues, 1–22 (MKAILIPFLSLLIPLTPQSAFA), serve as a signal peptide directing secretion. Position 38 (arginine 38) interacts with 1D-myo-inositol hexakisphosphate. Histidine 39 (nucleophile) is an active-site residue. Residues 42–46 (RAPTK) and arginine 114 each bind 1D-myo-inositol hexakisphosphate. Intrachain disulfides connect cysteine 99/cysteine 130, cysteine 155/cysteine 430, cysteine 200/cysteine 210, and cysteine 404/cysteine 413. 1D-myo-inositol hexakisphosphate-binding positions include arginine 289 and 325-327 (HDT). Aspartate 326 acts as the Proton donor in catalysis.

Belongs to the histidine acid phosphatase family. Monomer.

The protein localises to the periplasm. The catalysed reaction is 1D-myo-inositol hexakisphosphate + H2O = 1D-myo-inositol 1,2,3,4,5-pentakisphosphate + phosphate. The enzyme catalyses 1D-myo-inositol 1,2,3,4,5-pentakisphosphate + H2O = 1D-myo-inositol 2,3,4,5-tetrakisphosphate + phosphate. It catalyses the reaction 1D-myo-inositol 2,3,4,5-tetrakisphosphate + H2O = 1D-myo-inositol 2,4,5-triphosphate + phosphate. It carries out the reaction 1D-myo-inositol 2,4,5-triphosphate + H2O = 1D-myo-inositol 2,5-bisphosphate + phosphate. The catalysed reaction is 1D-myo-inositol 2,5-bisphosphate + H2O = 1D-myo-inositol 2-phosphate + phosphate. The enzyme catalyses GTP + H2O = GDP + phosphate + H(+). Its activity is regulated as follows. Contains three consecutive and one non-consecutive disulfide bonds and shows a strong dependence on DsbC for its full activity. Competitively inhibited by tartaric acid and by sodium fluorid. Catalyzes the hydrolysis of phytate (or myo-inositol hexakisphosphate, an indigestible organic form of phosphorus that is found in many plant tissues) to myo-inositol and inorganic phosphate. Dephosphorylates phytate in a stereospecific way by sequential removal of phosphate groups to produce myo-inositol 2-monophosphate. Also shows phosphoanhydride phosphatase activity and hydrolyzes the distal phosphoryl residues of GTP, the 5'-beta-phosphoryl residue of the regulatory nucleotide ppGpp and tripolyphosphates. Does not split most phosphomonoesters with the exception of the synthetic substrate p-nitrophenyl phosphate (pNPP), 2,3-bisphosphoglycerate and fructose 1,6-bisphosphate. This chain is Phytase AppA, found in Escherichia coli (strain K12).